The following is a 333-amino-acid chain: tRNA(Ile)-lysidine synthase (333 aa).

25 to 30 (SGGPDS) is a binding site for ATP.

Belongs to the tRNA(Ile)-lysidine synthase family.

It localises to the cytoplasm. It carries out the reaction cytidine(34) in tRNA(Ile2) + L-lysine + ATP = lysidine(34) in tRNA(Ile2) + AMP + diphosphate + H(+). Functionally, ligates lysine onto the cytidine present at position 34 of the AUA codon-specific tRNA(Ile) that contains the anticodon CAU, in an ATP-dependent manner. Cytidine is converted to lysidine, thus changing the amino acid specificity of the tRNA from methionine to isoleucine. This is tRNA(Ile)-lysidine synthase from Ureaplasma parvum serovar 3 (strain ATCC 700970).